We begin with the raw amino-acid sequence, 403 residues long: 26S proteasome regulatory subunit 8 homolog (403 aa).

Position 186 to 193 (186 to 193 (GPPGTGKT)) interacts with ATP.

The protein belongs to the AAA ATPase family.

The protein resides in the cytoplasm. Its subcellular location is the nucleus. Its function is as follows. The 26S proteasome is involved in the ATP-dependent degradation of ubiquitinated proteins. The regulatory (or ATPase) complex confers ATP dependency and substrate specificity to the 26S complex. The polypeptide is 26S proteasome regulatory subunit 8 homolog (let1) (Schizosaccharomyces pombe (strain 972 / ATCC 24843) (Fission yeast)).